A 212-amino-acid chain; its full sequence is Methylthioribulose-1-phosphate dehydratase (212 aa).

Zn(2+) is bound by residues His-97 and His-99.

Belongs to the aldolase class II family. MtnB subfamily. In terms of assembly, homotetramer. The cofactor is Zn(2+).

The enzyme catalyses 5-(methylsulfanyl)-D-ribulose 1-phosphate = 5-methylsulfanyl-2,3-dioxopentyl phosphate + H2O. The protein operates within amino-acid biosynthesis; L-methionine biosynthesis via salvage pathway; L-methionine from S-methyl-5-thio-alpha-D-ribose 1-phosphate: step 2/6. Functionally, catalyzes the dehydration of methylthioribulose-1-phosphate (MTRu-1-P) into 2,3-diketo-5-methylthiopentyl-1-phosphate (DK-MTP-1-P). The polypeptide is Methylthioribulose-1-phosphate dehydratase (Bacillus cytotoxicus (strain DSM 22905 / CIP 110041 / 391-98 / NVH 391-98)).